A 290-amino-acid chain; its full sequence is Phosphate import ATP-binding protein PstB (290 aa).

The ABC transporter domain maps to 25 to 285 (LEARNLDFYY…PKTRRARDYL (261 aa)). Residue 57 to 64 (GPSGCGKS) participates in ATP binding.

This sequence belongs to the ABC transporter superfamily. Phosphate importer (TC 3.A.1.7) family. As to quaternary structure, the complex is composed of two ATP-binding proteins (PstB), two transmembrane proteins (PstC and PstA) and a solute-binding protein (PstS).

The protein resides in the cell inner membrane. The enzyme catalyses phosphate(out) + ATP + H2O = ADP + 2 phosphate(in) + H(+). Part of the ABC transporter complex PstSACB involved in phosphate import. Responsible for energy coupling to the transport system. In Zymomonas mobilis subsp. mobilis (strain ATCC 31821 / ZM4 / CP4), this protein is Phosphate import ATP-binding protein PstB.